A 90-amino-acid chain; its full sequence is Putative septation protein SpoVG (90 aa).

The protein belongs to the SpoVG family.

Functionally, could be involved in septation. This is Putative septation protein SpoVG from Clostridium perfringens (strain ATCC 13124 / DSM 756 / JCM 1290 / NCIMB 6125 / NCTC 8237 / Type A).